The chain runs to 310 residues: Zinc finger protein unc-98 (310 aa).

Residues 73–84 are compositionally biased toward polar residues; that stretch reads GSSSAQTPTKSS. A disordered region spans residues 73-102; sequence GSSSAQTPTKSSGGALDGSDQQEVRQDGTS. 2 C2H2-type zinc fingers span residues 113-135 and 141-163; these read YKCR…ERIH and YVCG…AAQH. Residues 169–188 form a C2H2-type 3; degenerate zinc finger; it reads YKCECGRTFFSYTEMLYHKH. Residues 198–310 are interaction with myo-3; the sequence is APETTTIKVS…RTSGYVTPRF (113 aa). Residues 246 to 268 form a C2H2-type 4 zinc finger; sequence YICEYCSKSYSDSRGLAYHMYSH.

In terms of assembly, interacts with hum-6, mep-1, myo-3, unc-96 and unc-97/PINCH. In terms of tissue distribution, expressed in embryos from 1.5- to 2-fold stage in myofibrils. In larvae and adults, it is expressed in body wall muscle, and in addition, anal depressor muscle and vulval muscles. More specifically it is found in the thick filaments of muscle fibers.

Its subcellular location is the nucleus. The protein localises to the cytoplasm. Its function is as follows. Probable transcription factor required for muscle structure. Its dual subcellular localization suggests that it may function both as a muscle adhesion complex protein and as a transcription factor, or work together with transcription factors, to influence gene expression. Thought to act as a molecular bridge between unc-97 and myo-3 at the M-line of muscles, possibly in a signaling role. Plays a role in the formation of muscle connections, also called muscle arm extensions, between the body wall and the motor axons in the dorsal and ventral cord. This Caenorhabditis elegans protein is Zinc finger protein unc-98 (unc-98).